Here is a 397-residue protein sequence, read N- to C-terminus: Probable sugar efflux transporter (397 aa).

The next 12 helical transmembrane spans lie at 15–35 (VVTL…PVGL), 50–70 (VGIM…PFML), 81–101 (LICL…AWNF), 103–123 (VLVI…SITA), 136–156 (AQAL…GLPI), 169–189 (TFFA…KLLP), 209–229 (PALM…YTAY), 246–266 (FATV…VVFG), 275–295 (PLIS…LPAA), 301–321 (LAVL…GMQV), 333–353 (VAMA…ALVG), and 364–384 (TIGY…IIIF).

It belongs to the major facilitator superfamily. SotB (TC 2.A.1.2) family.

The protein localises to the cell inner membrane. Its function is as follows. Involved in the efflux of sugars. The physiological role may be the reduction of the intracellular concentration of toxic sugars or sugar metabolites. The protein is Probable sugar efflux transporter of Citrobacter koseri (strain ATCC BAA-895 / CDC 4225-83 / SGSC4696).